Here is a 250-residue protein sequence, read N- to C-terminus: Probable transcriptional regulatory protein Cvib_1432 (250 aa).

Belongs to the TACO1 family.

Its subcellular location is the cytoplasm. This is Probable transcriptional regulatory protein Cvib_1432 from Chlorobium phaeovibrioides (strain DSM 265 / 1930) (Prosthecochloris vibrioformis (strain DSM 265)).